Consider the following 969-residue polypeptide: Leucine--tRNA ligase (969 aa).

Positions 78–89 match the 'HIGH' region motif; the sequence is PYPSGEGLHVGH. A 'KMSKS' region motif is present at residues 739–743; the sequence is KIGKS. Residue Lys-742 coordinates ATP.

Belongs to the class-I aminoacyl-tRNA synthetase family.

Its subcellular location is the cytoplasm. The enzyme catalyses tRNA(Leu) + L-leucine + ATP = L-leucyl-tRNA(Leu) + AMP + diphosphate. In Mycobacterium tuberculosis (strain ATCC 25177 / H37Ra), this protein is Leucine--tRNA ligase.